The chain runs to 691 residues: Elongation factor G (691 aa).

Residues 8 to 283 (EDYRNFGIMA…AVVDYLPSPI (276 aa)) form the tr-type G domain. GTP is bound by residues 17 to 24 (AHIDAGKT), 81 to 85 (DTPGH), and 135 to 138 (NKMD).

Belongs to the TRAFAC class translation factor GTPase superfamily. Classic translation factor GTPase family. EF-G/EF-2 subfamily.

The protein resides in the cytoplasm. Its function is as follows. Catalyzes the GTP-dependent ribosomal translocation step during translation elongation. During this step, the ribosome changes from the pre-translocational (PRE) to the post-translocational (POST) state as the newly formed A-site-bound peptidyl-tRNA and P-site-bound deacylated tRNA move to the P and E sites, respectively. Catalyzes the coordinated movement of the two tRNA molecules, the mRNA and conformational changes in the ribosome. This Methylocella silvestris (strain DSM 15510 / CIP 108128 / LMG 27833 / NCIMB 13906 / BL2) protein is Elongation factor G.